The chain runs to 396 residues: L-lactate dehydrogenase (396 aa).

The FMN hydroxy acid dehydrogenase domain occupies 1 to 380 (MIISAASDYR…TQDSLVQVLG (380 aa)). Tyr-24 contacts substrate. Ser-106 and Gln-127 together coordinate FMN. Tyr-129 serves as a coordination point for substrate. FMN is bound at residue Thr-155. Arg-164 lines the substrate pocket. Lys-251 is a binding site for FMN. The active-site Proton acceptor is the His-275. Residue Arg-278 coordinates substrate. 306–330 (DSGIRNGLDVVRMIALGADTVLLGR) provides a ligand contact to FMN.

It belongs to the FMN-dependent alpha-hydroxy acid dehydrogenase family. It depends on FMN as a cofactor.

The protein resides in the cell inner membrane. It catalyses the reaction (S)-lactate + A = pyruvate + AH2. Its function is as follows. Catalyzes the conversion of L-lactate to pyruvate. Is coupled to the respiratory chain. This chain is L-lactate dehydrogenase, found in Escherichia coli O1:K1 / APEC.